Consider the following 1141-residue polypeptide: Eukaryotic translation initiation factor 3 subunit A (1141 aa).

The 183-residue stretch at 319 to 501 (LQRMAAHVLL…NSIYFGTDLT (183 aa)) folds into the PCI domain. Composition is skewed to basic and acidic residues over residues 588 to 623 (QNNA…EERE) and 829 to 899 (AAEE…RGGD). Disordered regions lie at residues 588–631 (QNNA…QNEI) and 829–1141 (AAEE…VKRR). Serine 908 carries the post-translational modification Phosphoserine. Composition is skewed to basic and acidic residues over residues 920–976 (ERND…EPDT), 990–1051 (SRDD…EPQR), 1059–1087 (DAPR…RGDQ), and 1110–1131 (TREE…KAGD).

It belongs to the eIF-3 subunit A family. Component of the eukaryotic translation initiation factor 3 (eIF-3) complex. The eIF-3 complex interacts with pix.

It is found in the cytoplasm. Functionally, RNA-binding component of the eukaryotic translation initiation factor 3 (eIF-3) complex, which is involved in protein synthesis of a specialized repertoire of mRNAs and, together with other initiation factors, stimulates binding of mRNA and methionyl-tRNAi to the 40S ribosome. The eIF-3 complex specifically targets and initiates translation of a subset of mRNAs involved in cell proliferation. In Drosophila sechellia (Fruit fly), this protein is Eukaryotic translation initiation factor 3 subunit A.